The following is a 179-amino-acid chain: Probable phosphopantothenoylcysteine decarboxylase (179 aa).

A substrate-binding site is contributed by asparagine 124. Cysteine 157 functions as the Proton donor in the catalytic mechanism.

The protein belongs to the HFCD (homooligomeric flavin containing Cys decarboxylase) superfamily. It depends on FMN as a cofactor.

The catalysed reaction is N-[(R)-4-phosphopantothenoyl]-L-cysteine + H(+) = (R)-4'-phosphopantetheine + CO2. Its pathway is cofactor biosynthesis; coenzyme A biosynthesis; CoA from (R)-pantothenate: step 3/5. Its function is as follows. Catalyzes the decarboxylation of 4'-phosphopantothenoylcysteine to 4'-phosphopantetheine. This is Probable phosphopantothenoylcysteine decarboxylase (coaC) from Streptococcus mutans serotype c (strain ATCC 700610 / UA159).